The primary structure comprises 480 residues: Uridine 5'-monophosphate synthase (480 aa).

Ala2 is subject to N-acetylalanine. The segment at 2–214 is OPRTase; that stretch reads AAVGAALGPL…VFVAANHNGS (213 aa). Tyr37 carries the phosphotyrosine modification. Ser214 bears the Phosphoserine mark. Residues 215–220 are domain linker; the sequence is PLSIKE. Residues 221 to 480 form an OMPdecase region; the sequence is APKELSFSAR…WEAYLSRLGV (260 aa). Ser257 lines the orotidine 5'-phosphate pocket. UMP contacts are provided by residues Ser257, Asp259, and 281–283; that span reads KTH. Residues Lys281, Lys314, Asp317, Thr321, Ser372, 430–432, and 450–451 each bind orotidine 5'-phosphate; these read QQY and GR. Active-site for OMPdecase activity residues include Lys314 and Asp317. UMP is bound by residues Asp317, Thr321, Ser372, 430 to 432, and 450 to 451; these read QQY and GR.

It in the N-terminal section; belongs to the purine/pyrimidine phosphoribosyltransferase family. In the C-terminal section; belongs to the OMP decarboxylase family. Homodimer; dimerization is required for enzymatic activity.

It catalyses the reaction orotidine 5'-phosphate + diphosphate = orotate + 5-phospho-alpha-D-ribose 1-diphosphate. It carries out the reaction orotidine 5'-phosphate + H(+) = UMP + CO2. It participates in pyrimidine metabolism; UMP biosynthesis via de novo pathway; UMP from orotate: step 1/2. The protein operates within pyrimidine metabolism; UMP biosynthesis via de novo pathway; UMP from orotate: step 2/2. In terms of biological role, bifunctional enzyme catalyzing the last two steps of de novo pyrimidine biosynthesis, orotate phosphoribosyltransferase (OPRT), which converts orotate to orotidine-5'-monophosphate (OMP), and orotidine-5'-monophosphate decarboxylase (ODC), the terminal enzymatic reaction that decarboxylates OMP to uridine monophosphate (UMP). This chain is Uridine 5'-monophosphate synthase (UMPS), found in Pongo abelii (Sumatran orangutan).